A 351-amino-acid chain; its full sequence is GTPase Obg (351 aa).

Residues 1-159 (MKFLDQAKVY…RWIWLRLKLI (159 aa)) form the Obg domain. Residues 160–328 (ADVGLVGLPN…LCGSAWDIVL (169 aa)) form the OBG-type G domain. GTP-binding positions include 166–173 (GLPNAGKS), 191–195 (FTTLY), 213–216 (DIPG), 280–283 (NKID), and 309–311 (SGV). Mg(2+) contacts are provided by S173 and T193.

The protein belongs to the TRAFAC class OBG-HflX-like GTPase superfamily. OBG GTPase family. Monomer. Mg(2+) is required as a cofactor.

Its subcellular location is the cytoplasm. In terms of biological role, an essential GTPase which binds GTP, GDP and possibly (p)ppGpp with moderate affinity, with high nucleotide exchange rates and a fairly low GTP hydrolysis rate. Plays a role in control of the cell cycle, stress response, ribosome biogenesis and in those bacteria that undergo differentiation, in morphogenesis control. The sequence is that of GTPase Obg from Maricaulis maris (strain MCS10) (Caulobacter maris).